Reading from the N-terminus, the 447-residue chain is MRLIQALSLCLALSLSLAAPPQHKEDHSHKGKPGGEGHKHELHHGAQLDRCKGIEFDAVAVNEEGVPYFFKGDHLFKGFHGKAELSNKTFPELDDHHHLGHVDAAFRMHSEDSPDHHDHQFFFLDNMVFSYFKHKLEKDYPKLISAVFPGIPDHLDAAVECPKPDCPNDTVIFFKGDEIYHFNMHTKKVDEKEFKSMPNCTGAFRYMGHYYCFHGHQFSKFDPMTGEVHGKYPKEARDYFMRCPHFGSKTTDDHIEREQCSRVHLDAITSDDAGNIYAFRGHHFLSITGDKFHSDTIESEFKELHSEVDSVFSYDGHFYMIKDNDVFVYKVGKPHTHLEGYPKPLKDVLGIEGPVDAAFVCEDHHVVHIIKGQSIYDVDLKATPRKLVKEGTITQFKRIDAAMCGPKGVTVVIGNHFYNYDSVQVMLMAKIMPEQQKVSQQLFGCDH.

Residues 1–18 form the signal peptide; the sequence is MRLIQALSLCLALSLSLA. Residues 20–44 are disordered; it reads PPQHKEDHSHKGKPGGEGHKHELHH. Positions 22-44 are enriched in basic and acidic residues; the sequence is QHKEDHSHKGKPGGEGHKHELHH. Hemopexin repeat units follow at residues 53 to 93, 99 to 151, 152 to 197, 198 to 243, 262 to 304, 305 to 351, 352 to 395, and 396 to 441; these read GIEF…FPEL, LGHV…FPGI, PDHL…FKSM, PNCT…FMRC, RVHL…FKEL, HSEV…VLGI, EGPV…TITQ, and FKRI…VSQQ. Asn87 is a glycosylation site (N-linked (GlcNAc...) asparagine). Residues Asn168 and Asn199 are each glycosylated (N-linked (GlcNAc...) asparagine). His293 contacts heme.

It belongs to the hemopexin family.

It is found in the secreted. Functionally, binds heme and transports it to the liver for breakdown and iron recovery, after which the free hemopexin returns to the circulation. The polypeptide is Hemopexin (Danio rerio (Zebrafish)).